The primary structure comprises 211 residues: ATP-dependent dethiobiotin synthetase BioD (211 aa).

An ATP-binding site is contributed by 13-18; the sequence is GVGKTV. Threonine 17 provides a ligand contact to Mg(2+). Lysine 33 is a catalytic residue. Mg(2+) contacts are provided by cysteine 47 and glutamate 101. Residues 101 to 104, 185 to 187, and asparagine 192 contribute to the ATP site; these read EGAG and PWL.

Belongs to the dethiobiotin synthetase family. In terms of assembly, homodimer. Requires Mg(2+) as cofactor.

It is found in the cytoplasm. The enzyme catalyses (7R,8S)-7,8-diammoniononanoate + CO2 + ATP = (4R,5S)-dethiobiotin + ADP + phosphate + 3 H(+). It participates in cofactor biosynthesis; biotin biosynthesis; biotin from 7,8-diaminononanoate: step 1/2. Functionally, catalyzes a mechanistically unusual reaction, the ATP-dependent insertion of CO2 between the N7 and N8 nitrogen atoms of 7,8-diaminopelargonic acid (DAPA, also called 7,8-diammoniononanoate) to form a ureido ring. The sequence is that of ATP-dependent dethiobiotin synthetase BioD from Bradyrhizobium diazoefficiens (strain JCM 10833 / BCRC 13528 / IAM 13628 / NBRC 14792 / USDA 110).